The sequence spans 141 residues: Small ribosomal subunit protein bS16 (141 aa).

Composition is skewed to polar residues over residues 89-101 (NVSVSHAESTEAI) and 109-129 (ATANTESNEVSDSESTATATI). Residues 89 to 141 (NVSVSHAESTEAITNAEPIQATANTESNEVSDSESTATATIRESEEQPPISES) form a disordered region.

This sequence belongs to the bacterial ribosomal protein bS16 family.

This Trichodesmium erythraeum (strain IMS101) protein is Small ribosomal subunit protein bS16.